Consider the following 430-residue polypeptide: Gamma-glutamyl phosphate reductase (430 aa).

This sequence belongs to the gamma-glutamyl phosphate reductase family.

Its subcellular location is the cytoplasm. It catalyses the reaction L-glutamate 5-semialdehyde + phosphate + NADP(+) = L-glutamyl 5-phosphate + NADPH + H(+). It functions in the pathway amino-acid biosynthesis; L-proline biosynthesis; L-glutamate 5-semialdehyde from L-glutamate: step 2/2. Catalyzes the NADPH-dependent reduction of L-glutamate 5-phosphate into L-glutamate 5-semialdehyde and phosphate. The product spontaneously undergoes cyclization to form 1-pyrroline-5-carboxylate. The protein is Gamma-glutamyl phosphate reductase of Psychrobacter arcticus (strain DSM 17307 / VKM B-2377 / 273-4).